The following is a 170-amino-acid chain: Transcriptional repressor NrdR (170 aa).

A zinc finger spans residues 3–34 (CPFCRHPDSRVVDSRVTDDGTAIRRRRSCPEC). The ATP-cone domain occupies 46 to 136 (LSVIKRSGVI…VYRGFESLED (91 aa)). Positions 151-170 (ERSETVERGRPVPSRGVDDR) are disordered.

The protein belongs to the NrdR family. Zn(2+) is required as a cofactor.

Functionally, negatively regulates transcription of bacterial ribonucleotide reductase nrd genes and operons by binding to NrdR-boxes. This Acidothermus cellulolyticus (strain ATCC 43068 / DSM 8971 / 11B) protein is Transcriptional repressor NrdR.